The primary structure comprises 336 residues: Fructose-1,6-bisphosphatase class 1 (336 aa).

Mg(2+) contacts are provided by Glu-90, Asp-112, Leu-114, and Asp-115. Residues 115–118 (DGSS), Asn-207, and Lys-273 each bind substrate. Mg(2+) is bound at residue Glu-279.

Belongs to the FBPase class 1 family. In terms of assembly, homotetramer. Mg(2+) serves as cofactor.

It localises to the cytoplasm. It carries out the reaction beta-D-fructose 1,6-bisphosphate + H2O = beta-D-fructose 6-phosphate + phosphate. It functions in the pathway carbohydrate biosynthesis; gluconeogenesis. The chain is Fructose-1,6-bisphosphatase class 1 from Xanthomonas axonopodis pv. citri (strain 306).